The primary structure comprises 1236 residues: Chitinase-like protein PB1E7.04c (1236 aa).

The signal sequence occupies residues Met-1–Ser-19. N-linked (GlcNAc...) asparagine glycans are attached at residues Asn-21, Asn-24, Asn-54, Asn-123, Asn-225, Asn-237, Asn-255, Asn-267, Asn-277, Asn-288, and Asn-309. Residues Thr-26–Lys-325 enclose the GH18 domain. Disordered regions lie at residues Ser-326–Ala-367, Val-449–Leu-497, and Thr-584–Leu-625. A compositionally biased stretch (polar residues) spans Gln-339 to Pro-351. A compositionally biased stretch (low complexity) spans Thr-352–Ala-367. 5 N-linked (GlcNAc...) asparagine glycosylation sites follow: Asn-715, Asn-737, Asn-768, Asn-786, and Asn-813. Disordered regions lie at residues Ile-804–Asn-836, Thr-868–Ser-927, Thr-946–Ala-979, and Ala-1125–Asn-1159. Positions Asn-810–Val-821 are enriched in polar residues. The span at Ser-822–Ser-832 shows a compositional bias: low complexity. The segment covering Ala-1125–Thr-1156 has biased composition (low complexity).

It belongs to the glycosyl hydrolase 18 family. Chitinase class III subfamily.

The protein localises to the secreted. The sequence is that of Chitinase-like protein PB1E7.04c from Schizosaccharomyces pombe (strain 972 / ATCC 24843) (Fission yeast).